A 218-amino-acid polypeptide reads, in one-letter code: Thiopurine S-methyltransferase (218 aa).

S-adenosyl-L-methionine contacts are provided by tryptophan 10, leucine 45, glutamate 66, and arginine 123.

It belongs to the class I-like SAM-binding methyltransferase superfamily. TPMT family.

The protein resides in the cytoplasm. It carries out the reaction S-adenosyl-L-methionine + a thiopurine = S-adenosyl-L-homocysteine + a thiopurine S-methylether.. This chain is Thiopurine S-methyltransferase, found in Xanthomonas axonopodis pv. citri (strain 306).